A 697-amino-acid chain; its full sequence is Gametogenetin-binding protein 2 (697 aa).

Serine 360 bears the Phosphoserine mark.

In terms of assembly, interacts with GGN. As to expression, expressed in heart, brain, placenta, lung, liver, skeletal muscle, kidney and pancreas. Expressed more abundantly in heart, pancreas and skeletal muscle.

It is found in the cytoplasmic vesicle. Its function is as follows. May be involved in spermatogenesis. This chain is Gametogenetin-binding protein 2 (GGNBP2), found in Homo sapiens (Human).